The following is a 179-amino-acid chain: Transcription termination/antitermination protein NusG (179 aa).

Positions 130–157 (EGDVVQIIDGAFMGQEGRVVEIENNKVK) constitute a KOW domain.

This sequence belongs to the NusG family.

Its function is as follows. Participates in transcription elongation, termination and antitermination. The polypeptide is Transcription termination/antitermination protein NusG (Streptococcus pyogenes serotype M1).